Here is a 525-residue protein sequence, read N- to C-terminus: MQKTSMNPVTDPVAAATGRVAIRQLPIKTQPNSQSLTPFLQLPPKPPPNLLFSSPLASVELRHRARARRRRRPSHPRRAPAMRMGKYEMGRALGEGHFGKVKLARHADTGAAFAIKILDRQRILAMKIDEQIKREIATLKLLKHPNVVRLHEVSASKTKIYMVLEYVNGGELFDKIALKGKLSEKEGRKLFQQLMDAVSYCHEKGVYHRDLKPENVLVDAKGNIKVSDFGLSALPQNQRKDGLLHTTCGSPNYIAPEVLLNRGYDGSLSDIWSCGVILYVMLTGNLPFDDQNTVVLYQKILKGDARIPKWLSPGAQDILRKILDPNPITRLDITGIRAHEWFRQDYTPAMPFDDDDDNNISDGNLHMTENQDIETSPAISQINAFQLIGMSSCLDLSGFFEKEDVSERKIRFVSNYSPTSLFEKIESTVTEKGFQVQKNSGKLKVIQVCKEPANPRGHGNLLISAEVFEINESLYVVELKRSSGDCSLYRQLCASLSEDLGICKRQQLLKKDSMRQDLCRYNSSF.

In terms of domain architecture, Protein kinase spans 87-342 (YEMGRALGEG…ITGIRAHEWF (256 aa)). ATP is bound by residues 93-101 (LGEGHFGKV) and Lys116. Asp210 serves as the catalytic Proton acceptor. Residues 228–257 (DFGLSALPQNQRKDGLLHTTCGSPNYIAPE) form an activation loop region. The 30-residue stretch at 372–401 (DIETSPAISQINAFQLIGMSSCLDLSGFFE) folds into the NAF domain. The PPI stretch occupies residues 407–436 (ERKIRFVSNYSPTSLFEKIESTVTEKGFQV).

The protein belongs to the protein kinase superfamily. CAMK Ser/Thr protein kinase family. SNF1 subfamily. Requires Mn(2+) as cofactor.

It carries out the reaction L-seryl-[protein] + ATP = O-phospho-L-seryl-[protein] + ADP + H(+). It catalyses the reaction L-threonyl-[protein] + ATP = O-phospho-L-threonyl-[protein] + ADP + H(+). CIPK serine-threonine protein kinases interact with CBL proteins. Binding of a CBL protein to the regulatory NAF domain of CIPK protein lead to the activation of the kinase in a calcium-dependent manner. This is CBL-interacting protein kinase 21 (CIPK21) from Oryza sativa subsp. japonica (Rice).